A 681-amino-acid chain; its full sequence is Methionine--tRNA ligase (681 aa).

A 'HIGH' region motif is present at residues 27–37; sequence DYANGTPHIGH. The 'KMSKS' region motif lies at 316 to 320; that stretch reads KMGKS. Residue K319 participates in ATP binding. Residues 522–571 form a disordered region; that stretch reads FPKPEPKADETKNAEAKPPKPQAKKEKKTVTDTAPAKTTEQKPEAAAPAQ. The segment covering 525–539 has biased composition (basic and acidic residues); that stretch reads PEPKADETKNAEAKP. A tRNA-binding domain is found at 580 to 681; it reads DFAKIDLRIA…LDLPSGTKVR (102 aa).

This sequence belongs to the class-I aminoacyl-tRNA synthetase family. MetG type 2B subfamily. Homodimer.

The protein localises to the cytoplasm. It catalyses the reaction tRNA(Met) + L-methionine + ATP = L-methionyl-tRNA(Met) + AMP + diphosphate. In terms of biological role, is required not only for elongation of protein synthesis but also for the initiation of all mRNA translation through initiator tRNA(fMet) aminoacylation. The sequence is that of Methionine--tRNA ligase (metG) from Deinococcus radiodurans (strain ATCC 13939 / DSM 20539 / JCM 16871 / CCUG 27074 / LMG 4051 / NBRC 15346 / NCIMB 9279 / VKM B-1422 / R1).